Consider the following 2242-residue polypeptide: DEP domain-containing protein DDB_G0279099 (2242 aa).

9 disordered regions span residues 388 to 465, 576 to 644, 701 to 730, 871 to 965, 1077 to 1194, 1287 to 1336, 1384 to 1414, 1446 to 1471, and 1502 to 1521; these read SQNT…SNNS, DSNA…YSRV, PILRNGGTINNNNNNQQNHPISPSNSFDQK, DPTT…TKKS, QLQL…AFNS, GSQQ…MNGS, SELLPSSSGASSSSSNTLSSSNSGENNALPE, AQSSLLNSSTNNANSNNSSNSTNTSG, and SNNNTYTNNNNNNNSINSLN. Positions 392–440 form a coiled coil; sequence IQNNNNNNNNNNNNNNNNNNNNNNNNNNNNNNNNNNNNNSNNNKNNQNN. Over residues 581–614 the composition is skewed to low complexity; it reads GGNNNNNYNNNNGNGNGHNHNNHNNNNNNNNNND. Residues 622 to 631 show a composition bias toward acidic residues; that stretch reads EPSDFSDTED. 2 stretches are compositionally biased toward polar residues: residues 632–642 and 719–729; these read NSSTTPNSQYS and HPISPSNSFDQ. Residues 872–955 show a composition bias toward low complexity; it reads PTTTTTTGGT…PNSSNTVPNS (84 aa). Positions 1066–1101 form a coiled coil; that stretch reads IPTVENNQHQQQLQLEQQEKEKEKARLAALEKKKPF. A compositionally biased stretch (basic and acidic residues) spans 1082 to 1106; it reads QQEKEKEKARLAALEKKKPFPREDS. Low complexity-rich tracts occupy residues 1108–1182 and 1287–1299; these read STLI…ATTA and GSQQQQQLIGSQS. The segment covering 1300-1311 has biased composition (polar residues); it reads APTSPLTPHKNI. Composition is skewed to low complexity over residues 1312 to 1336, 1384 to 1410, and 1446 to 1470; these read NTNNNNNNNTTTNTTNNNNSVMNGS, SELLPSSSGASSSSSNTLSSSNSGENN, and AQSSLLNSSTNNANSNNSSNSTNTS. In terms of domain architecture, DEP spans 1556–1629; that stretch reads IGIKMTERKY…DGQFYYRLKE (74 aa). Residues 1645-1668 are compositionally biased toward low complexity; that stretch reads TNNNFNNNNTNSNNNQQQQQQQQS. Disordered stretches follow at residues 1645–1763, 1803–1910, 2122–2145, and 2165–2218; these read TNNN…SMSN, DEAN…QQQQ, NYNNNNNNNNNNNGGGNGNPNLLK, and NSDT…KNEM. Positions 1669 to 1702 are enriched in polar residues; it reads IPSVTSSAVNSPNKDSNTPDHSPISSPKQIGNKL. 2 stretches are compositionally biased toward low complexity: residues 1703 to 1760 and 1807 to 1848; these read SSSS…IQSS and GDNN…SSNS. The stretch at 1791–1821 forms a coiled coil; sequence LTNKEKDKEKEIDEANGDNNNNNNNNNNNNN. Composition is skewed to polar residues over residues 1849-1871 and 1879-1889; these read GQGSLNSTLSSIPPATTPNTNPL and YGSSVQNSNQH. Low complexity-rich tracts occupy residues 1890–1910 and 2122–2133; these read QQQQPQQPQQQQQQQQQQQQQ and NYNNNNNNNNNN. Composition is skewed to basic and acidic residues over residues 2166-2181 and 2192-2218; these read SDTEEKNNESDSDNNH and DTDHLSESHEGSHKNESDKEGRDKNEM.

In the N-terminal section; belongs to the IML1 family.

The chain is DEP domain-containing protein DDB_G0279099 from Dictyostelium discoideum (Social amoeba).